The sequence spans 283 residues: N-terminal Xaa-Pro-Lys N-methyltransferase 2 (283 aa).

Residues G124, R129, D146, 174 to 175 (LQ), Q190, and H195 contribute to the S-adenosyl-L-methionine site.

This sequence belongs to the methyltransferase superfamily. NTM1 family.

It is found in the nucleus. It carries out the reaction N-terminal L-alanyl-L-prolyl-L-lysyl-[protein] + S-adenosyl-L-methionine = N-terminal N-methyl-L-alanyl-L-prolyl-L-lysyl-[protein] + S-adenosyl-L-homocysteine + H(+). The enzyme catalyses N-terminal L-prolyl-L-prolyl-L-lysyl-[protein] + S-adenosyl-L-methionine = N-terminal N-methyl-L-prolyl-L-prolyl-L-lysyl-[protein] + S-adenosyl-L-homocysteine + H(+). The catalysed reaction is N-terminal L-seryl-L-prolyl-L-lysyl-[protein] + S-adenosyl-L-methionine = N-terminal N-methyl-L-seryl-L-prolyl-L-lysyl-[protein] + S-adenosyl-L-homocysteine + H(+). Its function is as follows. Alpha N-methyltransferase that methylates the N-terminus of target proteins containing the N-terminal motif [Ala/Pro/Ser]-Pro-Lys when the initiator Met is cleaved. Specifically catalyzes monomethylation of exposed alpha-amino group of Ala or Ser residue in the [Ala/Ser]-Pro-Lys motif and Pro in the Pro-Pro-Lys motif. Predominantly functions as a mono-methyltransferase but is also able to di-/tri-methylate the GPKRIA peptide and di-methylate the PPKRIA peptide (in vitro). May activate NTMT1 by priming its substrates for trimethylation. In Homo sapiens (Human), this protein is N-terminal Xaa-Pro-Lys N-methyltransferase 2.